A 311-amino-acid chain; its full sequence is Dof zinc finger protein DOF1.4 (311 aa).

The segment covering 1 to 12 (MQSKNMIVASSH) has biased composition (polar residues). Residues 1–29 (MQSKNMIVASSHQQQQQQQPQQPQPQLKC) form a disordered region. The segment covering 13-26 (QQQQQQQPQQPQPQ) has biased composition (low complexity). Residues 27 to 81 (LKCPRCDSSNTKFCYYNNYSLSQPRHFCKACKRYWTRGGTLRNVPVGGSYRKNKR) form a Dof-type zinc finger. 4 residues coordinate Zn(2+): C29, C32, C54, and C57. The tract at residues 72–110 (VGGSYRKNKRVKRPSTATTTTASTVSTTNSSSPNNPHQI) is disordered. Positions 85–107 (PSTATTTTASTVSTTNSSSPNNP) are enriched in low complexity.

The protein localises to the nucleus. Transcription factor that binds specifically to a 5'-AA[AG]G-3' consensus core sequence. The chain is Dof zinc finger protein DOF1.4 (DOF1.4) from Arabidopsis thaliana (Mouse-ear cress).